The sequence spans 271 residues: NAD kinase (271 aa).

Catalysis depends on Asp-64, which acts as the Proton acceptor. NAD(+) is bound by residues Asp-64 to Gly-65, Arg-69, Asn-132 to Glu-133, Lys-143, Arg-160, Asp-162, Thr-173 to Ser-178, Ala-197, and Gln-231.

It belongs to the NAD kinase family. It depends on a divalent metal cation as a cofactor.

Its subcellular location is the cytoplasm. It catalyses the reaction NAD(+) + ATP = ADP + NADP(+) + H(+). Its function is as follows. Involved in the regulation of the intracellular balance of NAD and NADP, and is a key enzyme in the biosynthesis of NADP. Catalyzes specifically the phosphorylation on 2'-hydroxyl of the adenosine moiety of NAD to yield NADP. The chain is NAD kinase from Methanocorpusculum labreanum (strain ATCC 43576 / DSM 4855 / Z).